The chain runs to 471 residues: Light-independent protochlorophyllide reductase subunit N (471 aa).

Residues Cys-22, Cys-47, and Cys-107 each contribute to the [4Fe-4S] cluster site.

The protein belongs to the BchN/ChlN family. As to quaternary structure, protochlorophyllide reductase is composed of three subunits; ChlL, ChlN and ChlB. Forms a heterotetramer of two ChlB and two ChlN subunits. [4Fe-4S] cluster serves as cofactor.

The protein localises to the plastid. It is found in the chloroplast. The catalysed reaction is chlorophyllide a + oxidized 2[4Fe-4S]-[ferredoxin] + 2 ADP + 2 phosphate = protochlorophyllide a + reduced 2[4Fe-4S]-[ferredoxin] + 2 ATP + 2 H2O. The protein operates within porphyrin-containing compound metabolism; chlorophyll biosynthesis (light-independent). Functionally, component of the dark-operative protochlorophyllide reductase (DPOR) that uses Mg-ATP and reduced ferredoxin to reduce ring D of protochlorophyllide (Pchlide) to form chlorophyllide a (Chlide). This reaction is light-independent. The NB-protein (ChlN-ChlB) is the catalytic component of the complex. The protein is Light-independent protochlorophyllide reductase subunit N of Huperzia lucidula (Shining clubmoss).